Consider the following 200-residue polypeptide: Recombination protein RecR (200 aa).

The C4-type zinc-finger motif lies at 57–72 (CNECRTFTEEDVCHIC). In terms of domain architecture, Toprim spans 81-176 (GLLCVVESPA…DASRIAHGVP (96 aa)).

The protein belongs to the RecR family.

May play a role in DNA repair. It seems to be involved in an RecBC-independent recombinational process of DNA repair. It may act with RecF and RecO. This chain is Recombination protein RecR, found in Vibrio vulnificus (strain CMCP6).